A 153-amino-acid chain; its full sequence is Lipoprotein signal peptidase (153 aa).

The next 2 membrane-spanning stretches (helical) occupy residues Ile52–Val72 and Gly81–Ile101. Active-site residues include Asp111 and Asp129. Residues Ile124–Leu144 form a helical membrane-spanning segment.

Belongs to the peptidase A8 family.

It is found in the cell membrane. It catalyses the reaction Release of signal peptides from bacterial membrane prolipoproteins. Hydrolyzes -Xaa-Yaa-Zaa-|-(S,diacylglyceryl)Cys-, in which Xaa is hydrophobic (preferably Leu), and Yaa (Ala or Ser) and Zaa (Gly or Ala) have small, neutral side chains.. It participates in protein modification; lipoprotein biosynthesis (signal peptide cleavage). Functionally, this protein specifically catalyzes the removal of signal peptides from prolipoproteins. The polypeptide is Lipoprotein signal peptidase (Bacillus velezensis (strain DSM 23117 / BGSC 10A6 / LMG 26770 / FZB42) (Bacillus amyloliquefaciens subsp. plantarum)).